Here is a 491-residue protein sequence, read N- to C-terminus: 3-phosphoinositide-dependent protein kinase 1 (491 aa).

A Protein kinase domain is found at Phe44 to Phe311. Residues Ser54–Ser56 and Lys73 contribute to the ATP site. The interval Met75–Met119 is PIF-pocket. Residues Lys77 to Gln112 are PIF-binding. ATP is bound by residues Glu122 to Cys124 and Glu128. The Proton acceptor role is filled by Asp167. Glu171 provides a ligand contact to ATP. Ser177 is subject to Phosphoserine. Asp185 is an ATP binding site. The segment at Asp185–Glu222 is activation loop. Phosphothreonine; by autocatalysis is present on Thr211. A phosphoserine mark is found at Ser276 and Ser337. Residues Ser321–Ile377 are disordered. Low complexity predominate over residues Ser365–Ser376. Ser382 carries the post-translational modification Phosphoserine. One can recognise a PH domain in the interval Phe386–Arg491.

It belongs to the protein kinase superfamily. AGC Ser/Thr protein kinase family. PDPK1 subfamily. In terms of assembly, interacts with AGC1-5 and AGC1-7. Interacts with the C-terminal PIF domain of the protein kinases D6PK/AGC1-1, OXI1/AGC2-1 and PID. In terms of processing, phosphorylation on Thr-211 in the activation loop is required for full activity. PDK1 itself can autophosphorylate Thr-211, leading to its own activation. As to expression, ubiquitous.

It localises to the cytoplasm. It is found in the membrane. It carries out the reaction L-seryl-[protein] + ATP = O-phospho-L-seryl-[protein] + ADP + H(+). It catalyses the reaction L-threonyl-[protein] + ATP = O-phospho-L-threonyl-[protein] + ADP + H(+). With respect to regulation, activated by phosphatidic acid (PA) and in response to the fungal elicitor xylanase. In terms of biological role, may couple lipid signals to the activation-loop phosphorylation of several protein kinases of the so-called AGC kinase family. Interacts via its pleckstrin homology domain with phosphatidic acid, PtdIns3P and PtdIns(3,4)P2 and to a lesser extent with PtdIns(4,5)P2 and PtdIns4P. May play a general role in signaling processes controlling the pathogen/stress response, polar auxin transport and development. Transphosphorylates the AGC protein kinases OXI1/AGC2-1, PK1/S6K1, PK19/S6K2 and PID resulting in their activation. This chain is 3-phosphoinositide-dependent protein kinase 1 (PDPK1), found in Arabidopsis thaliana (Mouse-ear cress).